The sequence spans 337 residues: Protein XAP5 CIRCADIAN TIMEKEEPER (337 aa).

N-acetylserine is present on serine 2. 2 coiled-coil regions span residues 13–41 and 72–121; these read QDAVRIRRLQKQREAERKKIQELKSKSAS and TREE…GSSR. Positions 23–37 are enriched in basic and acidic residues; it reads KQREAERKKIQELKS. The tract at residues 23–47 is disordered; sequence KQREAERKKIQELKSKSASGNDQSG. Polar residues predominate over residues 38–47; that stretch reads KSASGNDQSG. The interval 125-174 is disordered; the sequence is AEDFENGSDEDDGENKSSGTGNLRCGKLGKDPSVETNFLPDSEREAEEQA. Residues 126-137 show a composition bias toward acidic residues; sequence EDFENGSDEDDG. Residue serine 132 is modified to Phosphoserine. Basic and acidic residues predominate over residues 165–174; it reads DSEREAEEQA.

It belongs to the FAM50 family. In terms of tissue distribution, expressed in leaves stems, flowers, roots, trichomes and hypocotyls.

The protein localises to the nucleus. In terms of biological role, involved in light regulation of the circadian clock and photomorphogenesis. May play a global role in coordinating growth in response to the light environment. Acts as a light quality sensor directing both negative and positive transcriptional regulation. Inhibits growth in red light but promote growth in blue light. Inhibits clock gene expression in diurnal cycles. Plays no role in the control of flowering time. The polypeptide is Protein XAP5 CIRCADIAN TIMEKEEPER (XCT) (Arabidopsis thaliana (Mouse-ear cress)).